The sequence spans 346 residues: Phosphoribosylformylglycinamidine cyclo-ligase (346 aa).

Belongs to the AIR synthase family.

Its subcellular location is the cytoplasm. The enzyme catalyses 2-formamido-N(1)-(5-O-phospho-beta-D-ribosyl)acetamidine + ATP = 5-amino-1-(5-phospho-beta-D-ribosyl)imidazole + ADP + phosphate + H(+). Its pathway is purine metabolism; IMP biosynthesis via de novo pathway; 5-amino-1-(5-phospho-D-ribosyl)imidazole from N(2)-formyl-N(1)-(5-phospho-D-ribosyl)glycinamide: step 2/2. This chain is Phosphoribosylformylglycinamidine cyclo-ligase, found in Vibrio atlanticus (strain LGP32) (Vibrio splendidus (strain Mel32)).